The chain runs to 94 residues: ESAT-6-like protein EsxO (94 aa).

This sequence belongs to the WXG100 family. ESAT-6 subfamily. In terms of assembly, forms a complex with EsxP.

The protein localises to the secreted. In Mycobacterium tuberculosis (strain CDC 1551 / Oshkosh), this protein is ESAT-6-like protein EsxO.